The sequence spans 316 residues: MANLKEIRDRIVSVKNTRKITEAMRLVAAAKVRRAQEQVLRSRPFADRLARVLQNIQSRMQFETADAPLLKSRDVRTITLLAVTGDRGLCGGYNTNIIKRTEQRYNELKRQGFTPDLVLIGRKAIGYFQNRSSQYKIRAFFQDLEQVPTSKDAESVTSEILAEFLSKSTDRIEVIYTKFISLVSCNPVVQTLLPLDPQGIAEEDDEMFRLTTKNSRLVVEKDAAPSNEQPKLPSDVVFEQSPDQLLNALLPLYLQNQLLRALQESAASELASRMTAMNNASDNAKELAKTLNLTYNKARQAAITQEILEVVGGSSS.

It belongs to the ATPase gamma chain family. As to quaternary structure, F-type ATPases have 2 components, CF(1) - the catalytic core - and CF(0) - the membrane proton channel. CF(1) has five subunits: alpha(3), beta(3), gamma(1), delta(1), epsilon(1). CF(0) has three main subunits: a, b and c.

It is found in the cellular thylakoid membrane. In terms of biological role, produces ATP from ADP in the presence of a proton gradient across the membrane. The gamma chain is believed to be important in regulating ATPase activity and the flow of protons through the CF(0) complex. In Prochlorococcus marinus (strain MIT 9211), this protein is ATP synthase gamma chain.